The following is a 223-amino-acid chain: MQLKPMEINPEMLNKVLSRLGVAGQWRFVDVLGLEEESLGSVPAPACALLLLFPLTAQHENFRKKQIEELKGQEVSPKVYFMKQTIGNSCGTIGLIHAVANNQDKLGFEDGSVLKQFLSETEKMSPEDRAKCFEKNEAIQAAHDAVAQEGQCRVDDKVNFHFILFNNVDGHLYELDGRMPFPVNHGASSEDTLLKDAAKVCREFTEREQGEVRFSAVALCKAA.

M1 is subject to N-acetylmethionine. A UCH catalytic domain is found at 2-221 (QLKPMEINPE…VRFSAVALCK (220 aa)). The interaction with ubiquitin stretch occupies residues 5-10 (PMEINP). C90 functions as the Nucleophile in the catalytic mechanism. The residue at position 125 (S125) is a Phosphoserine. Residue H161 is the Proton donor of the active site. The segment at 211–216 (EVRFSA) is interaction with ubiquitin. A lipid anchor (S-farnesyl cysteine) is attached at C220. Residues 221–223 (KAA) constitute a propeptide, removed in mature form.

This sequence belongs to the peptidase C12 family. In terms of assembly, monomer. Homodimer. Interacts with SNCA. Interacts with COPS5. Post-translationally, O-glycosylated. Found in neuronal cell bodies and processes throughout the neocortex (at protein level). Expressed in neurons and cells of the diffuse neuroendocrine system and their tumors. Weakly expressed in ovary. Down-regulated in brains from Parkinson disease and Alzheimer disease patients.

It is found in the cytoplasm. The protein resides in the endoplasmic reticulum membrane. The enzyme catalyses Thiol-dependent hydrolysis of ester, thioester, amide, peptide and isopeptide bonds formed by the C-terminal Gly of ubiquitin (a 76-residue protein attached to proteins as an intracellular targeting signal).. Functionally, deubiquitinase that plays a role in the regulation of several processes such as maintenance of synaptic function, cardiac function, inflammatory response or osteoclastogenesis. Abrogates the ubiquitination of multiple proteins including WWTR1/TAZ, EGFR, HIF1A and beta-site amyloid precursor protein cleaving enzyme 1/BACE1. In addition, recognizes and hydrolyzes a peptide bond at the C-terminal glycine of ubiquitin to maintain a stable pool of monoubiquitin that is a key requirement for the ubiquitin-proteasome and the autophagy-lysosome pathways. Regulates amyloid precursor protein/APP processing by promoting BACE1 degradation resulting in decreased amyloid beta production. Plays a role in the immune response by regulating the ability of MHC I molecules to reach cross-presentation compartments competent for generating Ag-MHC I complexes. Mediates the 'Lys-48'-linked deubiquitination of the transcriptional coactivator WWTR1/TAZ leading to its stabilization and inhibition of osteoclastogenesis. Deubiquitinates and stabilizes epidermal growth factor receptor EGFR to prevent its degradation and to activate its downstream mediators. Modulates oxidative activity in skeletal muscle by regulating key mitochondrial oxidative proteins. Enhances the activity of hypoxia-inducible factor 1-alpha/HIF1A by abrogateing its VHL E3 ligase-mediated ubiquitination and consequently inhibiting its degradation. The protein is Ubiquitin carboxyl-terminal hydrolase isozyme L1 (UCHL1) of Homo sapiens (Human).